The following is a 260-amino-acid chain: Indole-3-glycerol phosphate synthase (260 aa).

This sequence belongs to the TrpC family.

The catalysed reaction is 1-(2-carboxyphenylamino)-1-deoxy-D-ribulose 5-phosphate + H(+) = (1S,2R)-1-C-(indol-3-yl)glycerol 3-phosphate + CO2 + H2O. It functions in the pathway amino-acid biosynthesis; L-tryptophan biosynthesis; L-tryptophan from chorismate: step 4/5. The polypeptide is Indole-3-glycerol phosphate synthase (Staphylococcus haemolyticus (strain JCSC1435)).